We begin with the raw amino-acid sequence, 598 residues long: UvrABC system protein C (598 aa).

Residues 14–91 form the GIY-YIG domain; sequence DSPGCYLHKD…IQKNMPKYNI (78 aa). The UVR domain maps to 196–231; that stretch reads DKIIEDLRSKMLAASEEMAFERAAEYRDLISGIATM.

It belongs to the UvrC family. Interacts with UvrB in an incision complex.

Its subcellular location is the cytoplasm. Its function is as follows. The UvrABC repair system catalyzes the recognition and processing of DNA lesions. UvrC both incises the 5' and 3' sides of the lesion. The N-terminal half is responsible for the 3' incision and the C-terminal half is responsible for the 5' incision. In Streptococcus pyogenes serotype M5 (strain Manfredo), this protein is UvrABC system protein C.